Reading from the N-terminus, the 335-residue chain is Holliday junction branch migration complex subunit RuvB (335 aa).

A large ATPase domain (RuvB-L) region spans residues 1 to 181 (MERIIEIEKM…FGMNFWMQFY (181 aa)). Residues leucine 20, arginine 21, glycine 62, lysine 65, threonine 66, threonine 67, 128-130 (EDF), arginine 171, tyrosine 181, and arginine 218 contribute to the ATP site. Position 66 (threonine 66) interacts with Mg(2+). The segment at 182-252 (NIEELSQIIT…QARYALHELG (71 aa)) is small ATPAse domain (RuvB-S). The head domain (RuvB-H) stretch occupies residues 255-335 (DHGFDDLDLR…LPFEPNATLF (81 aa)). Residues arginine 309 and arginine 314 each coordinate DNA.

The protein belongs to the RuvB family. As to quaternary structure, homohexamer. Forms an RuvA(8)-RuvB(12)-Holliday junction (HJ) complex. HJ DNA is sandwiched between 2 RuvA tetramers; dsDNA enters through RuvA and exits via RuvB. An RuvB hexamer assembles on each DNA strand where it exits the tetramer. Each RuvB hexamer is contacted by two RuvA subunits (via domain III) on 2 adjacent RuvB subunits; this complex drives branch migration. In the full resolvosome a probable DNA-RuvA(4)-RuvB(12)-RuvC(2) complex forms which resolves the HJ.

The protein resides in the cytoplasm. It catalyses the reaction ATP + H2O = ADP + phosphate + H(+). The RuvA-RuvB-RuvC complex processes Holliday junction (HJ) DNA during genetic recombination and DNA repair, while the RuvA-RuvB complex plays an important role in the rescue of blocked DNA replication forks via replication fork reversal (RFR). RuvA specifically binds to HJ cruciform DNA, conferring on it an open structure. The RuvB hexamer acts as an ATP-dependent pump, pulling dsDNA into and through the RuvAB complex. RuvB forms 2 homohexamers on either side of HJ DNA bound by 1 or 2 RuvA tetramers; 4 subunits per hexamer contact DNA at a time. Coordinated motions by a converter formed by DNA-disengaged RuvB subunits stimulates ATP hydrolysis and nucleotide exchange. Immobilization of the converter enables RuvB to convert the ATP-contained energy into a lever motion, pulling 2 nucleotides of DNA out of the RuvA tetramer per ATP hydrolyzed, thus driving DNA branch migration. The RuvB motors rotate together with the DNA substrate, which together with the progressing nucleotide cycle form the mechanistic basis for DNA recombination by continuous HJ branch migration. Branch migration allows RuvC to scan DNA until it finds its consensus sequence, where it cleaves and resolves cruciform DNA. The chain is Holliday junction branch migration complex subunit RuvB from Wolinella succinogenes (strain ATCC 29543 / DSM 1740 / CCUG 13145 / JCM 31913 / LMG 7466 / NCTC 11488 / FDC 602W) (Vibrio succinogenes).